The chain runs to 200 residues: Putative NAD(P)H nitroreductase Spy0809 (200 aa).

Requires FMN as cofactor.

In Streptococcus pyogenes serotype M6 (strain ATCC BAA-946 / MGAS10394), this protein is Putative NAD(P)H nitroreductase Spy0809.